Here is a 232-residue protein sequence, read N- to C-terminus: MRGKILLYQLKYRWQSLSIFGCFLCKMTLFRYQKIIYDTGVHQMRSFFYTICSSEQQESITDHHSLAEICQKFNILPEHVVIEQVDIKEVVSEQRLLRQLIHHEMNRQDTLVIPDLSCLGRTVEDLQNILFFCLQKEMFIYSYHPASRIEPSAESCLSFLIARQDTIDIHNLKSTKSRYRHVKKKLGRKEGSKYRRDITILKKGGFTQAEIAKKLSISLSTVKRHWNNGIIG.

This is an uncharacterized protein from Escherichia coli (strain K12).